The following is a 168-amino-acid chain: Photosystem I assembly protein Ycf3 (168 aa).

TPR repeat units lie at residues 35–68 (AFTY…EIDP), 72–105 (SYIL…NPSL), and 120–153 (GEQA…APSN).

Belongs to the Ycf3 family.

It is found in the plastid. Its subcellular location is the chloroplast thylakoid membrane. Its function is as follows. Essential for the assembly of the photosystem I (PSI) complex. May act as a chaperone-like factor to guide the assembly of the PSI subunits. The sequence is that of Photosystem I assembly protein Ycf3 from Physcomitrium patens (Spreading-leaved earth moss).